The sequence spans 152 residues: Ribosome maturation factor RimP (152 aa).

This sequence belongs to the RimP family.

Its subcellular location is the cytoplasm. Required for maturation of 30S ribosomal subunits. The protein is Ribosome maturation factor RimP of Citrobacter koseri (strain ATCC BAA-895 / CDC 4225-83 / SGSC4696).